Consider the following 503-residue polypeptide: Maturase K (503 aa).

It belongs to the intron maturase 2 family. MatK subfamily.

The protein resides in the plastid. It localises to the chloroplast. Usually encoded in the trnK tRNA gene intron. Probably assists in splicing its own and other chloroplast group II introns. The chain is Maturase K from Liquidambar orientalis (Oriental sweet gum).